A 129-amino-acid polypeptide reads, in one-letter code: Small ribosomal subunit protein uS11 (129 aa).

This sequence belongs to the universal ribosomal protein uS11 family. Part of the 30S ribosomal subunit. Interacts with proteins S7 and S18. Binds to IF-3.

In terms of biological role, located on the platform of the 30S subunit, it bridges several disparate RNA helices of the 16S rRNA. Forms part of the Shine-Dalgarno cleft in the 70S ribosome. This is Small ribosomal subunit protein uS11 from Erythrobacter litoralis (strain HTCC2594).